Reading from the N-terminus, the 334-residue chain is AT-hook motif nuclear-localized protein 2 (334 aa).

A compositionally biased stretch (low complexity) spans 1-21 (METTGEVVKTTTGSDGGVTVV). Disordered regions lie at residues 1–103 (METT…PTTS) and 109–128 (STTS…PSSF). Residues 44–54 (SVAPPPPPPPQ) are compositionally biased toward pro residues. Basic residues predominate over residues 71–80 (IKKRRGRPRK). A Bipartite nuclear localization signal motif is present at residues 72 to 80 (KKRRGRPRK). The a.T hook DNA-binding region spans 72 to 84 (KKRRGRPRKYGHD). The span at 90 to 103 (LSPNPISSAAPTTS) shows a compositional bias: polar residues. In terms of domain architecture, PPC spans 147–287 (AANFTPHIIT…PHNHNFMSSP (141 aa)). Residues 306-319 (SSLPISTWTPSFPS) show a composition bias toward polar residues. Residues 306 to 334 (SSLPISTWTPSFPSDSRHKHSHDFNITLT) form a disordered region.

It localises to the nucleus. Transcription factor that specifically binds AT-rich DNA sequences related to the nuclear matrix attachment regions (MARs). The protein is AT-hook motif nuclear-localized protein 2 of Arabidopsis thaliana (Mouse-ear cress).